A 191-amino-acid chain; its full sequence is UPF0312 protein Sputcn32_2702 (191 aa).

Positions 1 to 22 (MKKQLLSALIGVSLLAPMAASA) are cleaved as a signal peptide.

This sequence belongs to the UPF0312 family. Type 1 subfamily.

Its subcellular location is the periplasm. The protein is UPF0312 protein Sputcn32_2702 of Shewanella putrefaciens (strain CN-32 / ATCC BAA-453).